The primary structure comprises 202 residues: Nucleoside triphosphate pyrophosphatase (202 aa).

Aspartate 79 functions as the Proton acceptor in the catalytic mechanism.

The protein belongs to the Maf family. A divalent metal cation serves as cofactor.

The protein resides in the cytoplasm. The catalysed reaction is a ribonucleoside 5'-triphosphate + H2O = a ribonucleoside 5'-phosphate + diphosphate + H(+). The enzyme catalyses a 2'-deoxyribonucleoside 5'-triphosphate + H2O = a 2'-deoxyribonucleoside 5'-phosphate + diphosphate + H(+). Functionally, nucleoside triphosphate pyrophosphatase. May have a dual role in cell division arrest and in preventing the incorporation of modified nucleotides into cellular nucleic acids. The polypeptide is Nucleoside triphosphate pyrophosphatase (Bradyrhizobium diazoefficiens (strain JCM 10833 / BCRC 13528 / IAM 13628 / NBRC 14792 / USDA 110)).